Reading from the N-terminus, the 653-residue chain is Translation factor GUF1, mitochondrial (653 aa).

The 181-residue stretch at 56–236 folds into the tr-type G domain; the sequence is ENYRNFSIVA…SIIKNIPAPN (181 aa). Residues 65 to 72, 129 to 133, and 183 to 186 each bind GTP; these read AHVDHGKS, DTPGH, and NKID.

The protein belongs to the TRAFAC class translation factor GTPase superfamily. Classic translation factor GTPase family. LepA subfamily.

The protein localises to the mitochondrion inner membrane. It carries out the reaction GTP + H2O = GDP + phosphate + H(+). Functionally, promotes mitochondrial protein synthesis. May act as a fidelity factor of the translation reaction, by catalyzing a one-codon backward translocation of tRNAs on improperly translocated ribosomes. Binds to mitochondrial ribosomes in a GTP-dependent manner. This Candida tropicalis (strain ATCC MYA-3404 / T1) (Yeast) protein is Translation factor GUF1, mitochondrial.